A 141-amino-acid chain; its full sequence is Hemoglobin subunit alpha-A (141 aa).

Positions 1 to 141 constitute a Globin domain; the sequence is VLSSGDKANV…VSTVLTSKYR (141 aa). Histidine 58 lines the O2 pocket. A heme b-binding site is contributed by histidine 87.

The protein belongs to the globin family. In terms of assembly, heterotetramer of two alpha chains and two beta chains. In terms of tissue distribution, red blood cells.

Involved in oxygen transport from the lung to the various peripheral tissues. In Caretta caretta (Loggerhead sea turtle), this protein is Hemoglobin subunit alpha-A (HBAA).